We begin with the raw amino-acid sequence, 284 residues long: N-acylphosphatidylethanolamine synthase (284 aa).

Residues 21 to 37 (TVIMAVSAFAKAVANLC) traverse the membrane as a helical segment. An HXXXXD motif motif is present at residues 67–72 (HMSTLD). A hydrophilic region spans residues 122–163 (GGGIYQENMNEALQRLKDGSWLHTFPEGKVFQDDVPIRRLKW).

It belongs to the taffazin family. Essentially present in young tissues. Expressed in roots, cotyledons, leaves, and shoot and root apical meristems.

It is found in the cell membrane. Functionally, acyltransferase that catalyzes the N-acylation of phosphatidylethanolamine to form N-acylphosphatidylethanolamine (N-acyl-PE) (e.g. NAPEs containing C16:0, C16:1, C18:0, and C18:1). Also mediates the formation of acylphosphatidylglycerol (acyl-PG) from lysoglycerophospholipid by O-acylation. Uses acyl-CoA as acyl donors. Acylates 1-acyllysophosphatidylethanolamine (1-acyllyso-PE) and 1-acyllysophosphatidylglycerol (1-acyllyso-PG) at the sn-2-position. The chain is N-acylphosphatidylethanolamine synthase from Arabidopsis thaliana (Mouse-ear cress).